We begin with the raw amino-acid sequence, 294 residues long: Cell division protein FtsQ (294 aa).

Topologically, residues 1–26 are cytoplasmic; the sequence is MARGPNRRRVDRVPGERRRRLARAMA. A helical transmembrane segment spans residues 27–49; that stretch reads LALPSILALAALGGAATLGWRVG. Over 50-294 the chain is Periplasmic; it reads WKSDLLRVRE…GPQGRSSSLR (245 aa). The POTRA domain occupies 55 to 123; that stretch reads LRVREIRFEG…PALEVQLAER (69 aa). The interval 266–294 is disordered; that stretch reads AGRRGEPDGRSSYAAGGGGGPQGRSSSLR.

This sequence belongs to the FtsQ/DivIB family. FtsQ subfamily.

The protein localises to the cell inner membrane. Its function is as follows. Essential cell division protein. This Anaeromyxobacter sp. (strain K) protein is Cell division protein FtsQ.